The primary structure comprises 718 residues: Polyribonucleotide nucleotidyltransferase (718 aa).

2 residues coordinate Mg(2+): Asp-491 and Asp-497. A KH domain is found at 558–617; sequence PRMLTIKINPEKIRDVIGKGGATIRALTEETGTQIDISDDGTIVIASVDEGQAKEAQRRI. One can recognise an S1 motif domain in the interval 627-695; it reads GQVYDGSVLR…EKGRLRLSVK (69 aa).

Belongs to the polyribonucleotide nucleotidyltransferase family. Mg(2+) is required as a cofactor.

Its subcellular location is the cytoplasm. The enzyme catalyses RNA(n+1) + phosphate = RNA(n) + a ribonucleoside 5'-diphosphate. Functionally, involved in mRNA degradation. Catalyzes the phosphorolysis of single-stranded polyribonucleotides processively in the 3'- to 5'-direction. The chain is Polyribonucleotide nucleotidyltransferase from Bordetella avium (strain 197N).